A 340-amino-acid chain; its full sequence is KH domain-containing RNA-binding protein QKI (340 aa).

Positions 87–153 (YVPVKEYPDF…WEHLNEDLHV (67 aa)) constitute a KH domain. The short motif at 275–278 (PPGP) is the SH3-binding element. The Nuclear localization signal signature appears at 323-329 (RVHPYQR).

Belongs to the quaking family. Homodimer; does not require RNA to homodimerize.

The protein localises to the cytoplasm. Its subcellular location is the nucleus. RNA reader protein, which recognizes and binds specific RNAs, thereby regulating RNA metabolic processes, such as pre-mRNA splicing, circular RNA (circRNA) formation, mRNA export, mRNA stability and/or translation. Involved in various cellular processes, such as mRNA storage into stress granules, apoptosis, interferon response, glial cell fate and development. Binds to the 5'-NACUAAY-N(1,20)-UAAY-3' RNA core sequence. Acts as a mRNA modification reader that specifically recognizes and binds mRNA transcripts modified by internal N(7)-methylguanine (m7G). Promotes the formation of circular RNAs (circRNAs): acts by binding to sites flanking circRNA-forming exons. CircRNAs are produced by back-splicing circularization of pre-mRNAs. Required to protect and promote stability of mRNAs which promotes oligodendrocyte differentiation. Acts as an important regulator of muscle development. This chain is KH domain-containing RNA-binding protein QKI, found in Gallus gallus (Chicken).